Here is a 100-residue protein sequence, read N- to C-terminus: Urease subunit gamma (100 aa).

It belongs to the urease gamma subunit family. In terms of assembly, heterotrimer of UreA (gamma), UreB (beta) and UreC (alpha) subunits. Three heterotrimers associate to form the active enzyme.

It localises to the cytoplasm. The enzyme catalyses urea + 2 H2O + H(+) = hydrogencarbonate + 2 NH4(+). It functions in the pathway nitrogen metabolism; urea degradation; CO(2) and NH(3) from urea (urease route): step 1/1. The polypeptide is Urease subunit gamma (Laribacter hongkongensis (strain HLHK9)).